A 341-amino-acid chain; its full sequence is Major histocompatibility complex class I-related protein 1 (341 aa).

Positions 1–18 are cleaved as a signal peptide; that stretch reads MMLLLPLLAVFLVKRSHT. The segment at 19 to 105 is alpha-1; the sequence is RTHSLRYFRL…RHLQRHYNHS (87 aa). Residues 19–197 form an antigen-binding cleft region; it reads RTHSLRYFRL…EYGRDTLERT (179 aa). At 19-296 the chain is on the extracellular side; sequence RTHSLRYFRL…APRESGDILR (278 aa). Residues Tyr-25 and Arg-27 each contribute to the 8-(9H-purin-6-yl)-2-oxa-8-azabicyclo[3.3.1]nona-3,6-diene-4,6-dicarbaldehyde site. 5-(2-oxoethylideneamino)-6-(D-ribitylamino)uracil is bound by residues Arg-27, Ser-42, and Lys-61. 3 residues coordinate 5-(2-oxopropylideneamino)-6-(D-ribitylamino)uracil: Arg-27, Ser-42, and Lys-61. 7-hydroxy-6-methyl-8-(1-D-ribityl)lumazine contacts are provided by Arg-27, Ser-42, and Lys-61. Residues Lys-61 and His-76 each contribute to the 8-(9H-purin-6-yl)-2-oxa-8-azabicyclo[3.3.1]nona-3,6-diene-4,6-dicarbaldehyde site. Lys-61 is a binding site for 2-amino-4-oxopteridine-6-carbaldehyde. Pyridoxal is bound at residue Lys-61. Asn-103 carries an N-linked (GlcNAc...) asparagine glycan. Positions 106–197 are alpha-2; sequence GLHTYQRMIG…EYGRDTLERT (92 aa). Residue Arg-112 coordinates 8-(9H-purin-6-yl)-2-oxa-8-azabicyclo[3.3.1]nona-3,6-diene-4,6-dicarbaldehyde. Arg-112, Tyr-170, and Gln-171 together coordinate 5-(2-oxoethylideneamino)-6-(D-ribitylamino)uracil. 5-(2-oxopropylideneamino)-6-(D-ribitylamino)uracil-binding residues include Arg-112, Tyr-170, and Gln-171. Residues Arg-112, Tyr-170, and Gln-171 each contribute to the 7-hydroxy-6-methyl-8-(1-D-ribityl)lumazine site. Cystine bridges form between Cys-116–Cys-179 and Cys-218–Cys-274. The interval 198–289 is alpha-3; that stretch reads EHPVVRTTRK…GRQMVLEAPR (92 aa). Positions 200-301 constitute an Ig-like C1-type domain; it reads PVVRTTRKET…GDILRVSTIS (102 aa). A connecting peptide region spans residues 290–296; that stretch reads ESGDILR. A helical transmembrane segment spans residues 297 to 317; it reads VSTISGTTILIIALAGVGVLI. The Cytoplasmic portion of the chain corresponds to 318 to 341; the sequence is WRRSQELKEVMYQPTQVNEGSSPS.

It belongs to the MHC class I family. Heterotrimer that consists of MR1, B2M and metabolite antigen. Major classes of metabolite ligands presented by MR1 include riboflavin-related antigens, pyrimidines and ribityl lumazines, nucleobase adducts and folate derivatives. Forms reversible covalent Schiff base complexes with microbial pyrimidine-based metabolite, which serves as a molecular switch triggering complete folding, stable association with B2M and translocation of the ternary complex from endoplasmic reticulum to the plasma membrane. Alternatively, forms non-Schiff base complexes with ribityl lumazines. On antigen-presenting cells, the ternary complex interacts with TCR on MR1-restricted CD4- or CD8-positive T cell subsets. Interacts with TAPBP and TAPBPL chaperones in the endoplasmic reticulum. TAPBP associated or not with MHC class I peptide loading complex binds ligand-free MR1 or MR1-B2M complex, providing for stable MR1 pools ready for metabolite antigen processing. TAPBPL interacts with MR1 in a ligand-independent way; this interaction may stabilize MR1 pool and facilitate ligand loading and dissociation. Structurally, MR1-B2M heterodimer adopts a topology similar to classical MHC class I molecules, with alpha-1 and alpha-2 domains of MR1 forming the antigen-binding cleft composed of two alpha-helices resting on a floor of 7-stranded anti-parallel beta-pleated sheet. Post-translationally, N-glycosylated. In terms of tissue distribution, highly expressed thymus. Expressed in liver, kidney, spleen, heart, brain, lung, skeletal muscle and testis.

The protein localises to the cell membrane. It is found in the endoplasmic reticulum membrane. The protein resides in the golgi apparatus membrane. It localises to the early endosome membrane. Its subcellular location is the late endosome membrane. Its function is as follows. Antigen-presenting molecule specialized in displaying microbial pyrimidine-based metabolites to alpha-beta T cell receptors (TCR) on innate-type mucosal-associated invariant T (MAIT) cells. In complex with B2M preferentially presents riboflavin-derived metabolites to semi-invariant TRAV1 TCRs on MAIT cells, guiding immune surveillance of the microbial metabolome at mucosal epithelial barriers. Signature pyrimidine-based microbial antigens are generated via non-enzymatic condensation of metabolite intermediates of the riboflavin pathway with by-products arising from other metabolic pathways such as glycolysis. Typical potent antigenic metabolites are 5-(2-oxoethylideneamino)-6-D-ribitylaminouracil (5-OE-RU) and 5-(2-oxopropylideneamino)-6-D-ribitylaminouracil (5-OP-RU), products of condensation of 5-amino-6-D-ribityaminouracil (5-A-RU) with glyoxal or methylglyoxal by-products, respectively. May present microbial antigens to various TRAV1-negative MAIT cell subsets, providing for unique recognition of diverse microbes, including pathogens that do not synthesize riboflavin. Upon antigen recognition, elicits rapid innate-type MAIT cell activation to eliminate pathogenic microbes by directly killing infected cells. During T cell development, drives thymic selection and post-thymic terminal differentiation of MAIT cells in a process dependent on commensal microflora. Acts as an immune sensor of cancer cell metabolome. May present a tumor-specific or -associated metabolite essential for cancer cell survival to a pan-cancer TCR on a non-MAIT CD8-positive T cell clone, triggering T cell-mediated killing of a wide range of cancer cell types. May present tumor-enriched pyridoxal and pyridoxal 5'-phosphate antigens, enabling preferential recognition of cancer cells. Presents nucleobase carbonyl adducts generated during oxidative stress. Captures M3Ade, a nucleobase adduct composed of one adenine modified by a malondialdehyde trimer, for recognition by MR1-restricted T cell clones expressing a polyclonal TCR repertoire. The polypeptide is Major histocompatibility complex class I-related protein 1 (Mus musculus (Mouse)).